The primary structure comprises 65 residues: Large ribosomal subunit protein bL35c (65 aa).

The interval 18 to 50 (SSGKILRHKASKSHLLQKKSSKHRRHLSSTCQV) is disordered. Basic residues predominate over residues 22 to 44 (ILRHKASKSHLLQKKSSKHRRHL).

It belongs to the bacterial ribosomal protein bL35 family.

The protein resides in the plastid. It is found in the chloroplast. The protein is Large ribosomal subunit protein bL35c of Porphyra purpurea (Red seaweed).